Reading from the N-terminus, the 970-residue chain is Insulin-degrading enzyme-like 1, peroxisomal (970 aa).

A Zn(2+)-binding site is contributed by histidine 69. Glutamate 72 serves as the catalytic Proton acceptor. Histidine 73 serves as a coordination point for Zn(2+). Glutamate 143 is an active-site residue. Residue glutamate 150 participates in Zn(2+) binding.

Belongs to the peptidase M16 family. Requires Zn(2+) as cofactor.

It is found in the peroxisome. Its function is as follows. Peptidase that might be involved in pathogen or wound response. Not required for peroxisome biogenesis, indole-3-butyric acid (IBA) metabolism, fatty acid beta-oxidation or degradation of glyoxylate cycle enzymes during seedling development. This Arabidopsis thaliana (Mouse-ear cress) protein is Insulin-degrading enzyme-like 1, peroxisomal (PXM16).